The primary structure comprises 192 residues: GTP cyclohydrolase 1 (192 aa).

Residues Cys-81, His-84, and Cys-153 each contribute to the Zn(2+) site.

Belongs to the GTP cyclohydrolase I family. As to quaternary structure, toroid-shaped homodecamer, composed of two pentamers of five dimers.

The enzyme catalyses GTP + H2O = 7,8-dihydroneopterin 3'-triphosphate + formate + H(+). It participates in cofactor biosynthesis; 7,8-dihydroneopterin triphosphate biosynthesis; 7,8-dihydroneopterin triphosphate from GTP: step 1/1. The chain is GTP cyclohydrolase 1 from Streptococcus mutans serotype c (strain ATCC 700610 / UA159).